The primary structure comprises 456 residues: UDP-glycosyltransferase 74D1 (456 aa).

UDP-alpha-D-glucose-binding positions include Ser-279, 332 to 334 (SPQ), 349 to 357 (HCGWNSTLE), and 371 to 374 (YSDQ).

The protein belongs to the UDP-glycosyltransferase family. Expressed in leaves.

Its function is as follows. Glucosyltransferase that glucosylates jasmonate (JA) and JA derivatives. Also active on indole-3-acetic acid (IAA), 4-coumrate, cinnamate and caffeate. This is UDP-glycosyltransferase 74D1 (UGT74D1) from Arabidopsis thaliana (Mouse-ear cress).